The primary structure comprises 725 residues: Glutamine-dependent NAD(+) synthetase (725 aa).

The CN hydrolase domain occupies 5-275 (VTVATCALNQ…VEVLTATLDL (271 aa)). The Proton acceptor; for glutaminase activity role is filled by glutamate 45. Lysine 114 acts as the For glutaminase activity in catalysis. The active-site Nucleophile; for glutaminase activity is the cysteine 175. The tract at residues 325–706 (YHRPEEEISL…KASQTREEQV (382 aa)) is ligase. 355-362 (PLSGGVDS) is a binding site for ATP. Serine 357 is an active-site residue.

This sequence in the C-terminal section; belongs to the NAD synthetase family. As to quaternary structure, homohexamer. Highly expressed in small intestine, kidney, liver and testis. Weakly expressed in skeletal muscle, spleen, lung, heart and brain.

The catalysed reaction is deamido-NAD(+) + L-glutamine + ATP + H2O = L-glutamate + AMP + diphosphate + NAD(+) + H(+). It participates in cofactor biosynthesis; NAD(+) biosynthesis; NAD(+) from deamido-NAD(+) (L-Gln route): step 1/1. Catalyzes the final step of the nicotinamide adenine dinucleotide (NAD) de novo synthesis pathway, the ATP-dependent amidation of deamido-NAD using L-glutamine as a nitrogen source. The protein is Glutamine-dependent NAD(+) synthetase (Nadsyn1) of Mus musculus (Mouse).